The following is a 447-amino-acid chain: Citrate synthase-like protein oryE (447 aa).

Residues His331 and Asp387 contribute to the active site.

This sequence belongs to the citrate synthase family.

The protein operates within secondary metabolite biosynthesis. Its function is as follows. Citrate synthase-like protein; part of the gene cluster that mediates the biosynthesis of oryzines, natural products with an unusual maleidride backbone. The two subunits of the fungal fatty acid synthase oryfasA and oryfasB probably form octenoic acid. This fatty acid is most likely activated by the acyl-CoA ligase oryP to give octenyl-CoA before the citrate synthase-like protein oryE catalyzes condensation with oxaloacetate to form tricarboxylic acid. The next steps of the pathways are conjectural, but a favorite possible route has been proposed, beginning with decarboxylation and concomitant dehydration by the decarboxylase oryM, followed by tautomerization, which may lead to the production of a diene intermediate. Reduction of this diene intermediate could give the known metabolite piliformic acid. On the pathway to oryzine B and oryzine A, however, hydroxylation of the diene by the alpha-ketoglutarate-dependent dioxygenase oryG and lactonisation by the lactonohydrolases oryH or oryL could give oryzine B directly. Finally, enoyl reduction by the dehydrogenase oryD would then convert oryzine B into oryzine A. This chain is Citrate synthase-like protein oryE, found in Aspergillus oryzae (strain ATCC 42149 / RIB 40) (Yellow koji mold).